Reading from the N-terminus, the 132-residue chain is Small ribosomal subunit protein uS15 (132 aa).

It belongs to the universal ribosomal protein uS15 family. In terms of assembly, part of the 30S ribosomal subunit.

This is Small ribosomal subunit protein uS15 from Methanobrevibacter smithii (strain ATCC 35061 / DSM 861 / OCM 144 / PS).